The chain runs to 208 residues: GTP-binding protein Rho1 (208 aa).

Gly19–Thr26 lines the GTP pocket. An Effector region motif is present at residues Tyr41–Tyr49. GTP-binding positions include Asp66–Gln70 and Cys124–Asp127. The tract at residues Gly188–Leu208 is disordered. Positions Gly191–Leu208 are enriched in basic residues. The residue at position 205 (Cys205) is a Cysteine methyl ester. A lipid anchor (S-geranylgeranyl cysteine) is attached at Cys205. Positions Val206–Leu208 are cleaved as a propeptide — removed in mature form.

This sequence belongs to the small GTPase superfamily. Rho family.

Its subcellular location is the cell membrane. The sequence is that of GTP-binding protein Rho1 (RHO1) from Kluyveromyces lactis (strain ATCC 8585 / CBS 2359 / DSM 70799 / NBRC 1267 / NRRL Y-1140 / WM37) (Yeast).